A 339-amino-acid chain; its full sequence is Ketol-acid reductoisomerase (NADP(+)) (339 aa).

Residues 1 to 182 (MRVYYDRDAD…GGGRAGIIET (182 aa)) form the KARI N-terminal Rossmann domain. NADP(+)-binding positions include 24–27 (YGSQ), Arg-48, Ser-51, Ser-53, and 83–86 (DELQ). His-108 is a catalytic residue. NADP(+) is bound at residue Gly-134. The KARI C-terminal knotted domain maps to 183 to 328 (TFREECETDL…ARLRDMMPWI (146 aa)). Positions 191, 195, 227, and 231 each coordinate Mg(2+). Ser-252 is a binding site for substrate.

The protein belongs to the ketol-acid reductoisomerase family. It depends on Mg(2+) as a cofactor.

It catalyses the reaction (2R)-2,3-dihydroxy-3-methylbutanoate + NADP(+) = (2S)-2-acetolactate + NADPH + H(+). It carries out the reaction (2R,3R)-2,3-dihydroxy-3-methylpentanoate + NADP(+) = (S)-2-ethyl-2-hydroxy-3-oxobutanoate + NADPH + H(+). It functions in the pathway amino-acid biosynthesis; L-isoleucine biosynthesis; L-isoleucine from 2-oxobutanoate: step 2/4. Its pathway is amino-acid biosynthesis; L-valine biosynthesis; L-valine from pyruvate: step 2/4. Its function is as follows. Involved in the biosynthesis of branched-chain amino acids (BCAA). Catalyzes an alkyl-migration followed by a ketol-acid reduction of (S)-2-acetolactate (S2AL) to yield (R)-2,3-dihydroxy-isovalerate. In the isomerase reaction, S2AL is rearranged via a Mg-dependent methyl migration to produce 3-hydroxy-3-methyl-2-ketobutyrate (HMKB). In the reductase reaction, this 2-ketoacid undergoes a metal-dependent reduction by NADPH to yield (R)-2,3-dihydroxy-isovalerate. In Nitrobacter winogradskyi (strain ATCC 25391 / DSM 10237 / CIP 104748 / NCIMB 11846 / Nb-255), this protein is Ketol-acid reductoisomerase (NADP(+)).